The following is a 476-amino-acid chain: Ribulose bisphosphate carboxylase large chain (476 aa).

The propeptide occupies 1-2; it reads MS. Residue P3 is modified to N-acetylproline. K14 bears the N6,N6,N6-trimethyllysine mark. Residues N123 and T173 each coordinate substrate. K175 (proton acceptor) is an active-site residue. K177 lines the substrate pocket. Mg(2+) contacts are provided by K201, D203, and E204. At K201 the chain carries N6-carboxylysine. The active-site Proton acceptor is H294. Positions 295, 327, and 379 each coordinate substrate.

This sequence belongs to the RuBisCO large chain family. Type I subfamily. Heterohexadecamer of 8 large chains and 8 small chains; disulfide-linked. The disulfide link is formed within the large subunit homodimers. Mg(2+) serves as cofactor. Post-translationally, the disulfide bond which can form in the large chain dimeric partners within the hexadecamer appears to be associated with oxidative stress and protein turnover.

It localises to the plastid. Its subcellular location is the chloroplast. The enzyme catalyses 2 (2R)-3-phosphoglycerate + 2 H(+) = D-ribulose 1,5-bisphosphate + CO2 + H2O. It catalyses the reaction D-ribulose 1,5-bisphosphate + O2 = 2-phosphoglycolate + (2R)-3-phosphoglycerate + 2 H(+). Functionally, ruBisCO catalyzes two reactions: the carboxylation of D-ribulose 1,5-bisphosphate, the primary event in carbon dioxide fixation, as well as the oxidative fragmentation of the pentose substrate in the photorespiration process. Both reactions occur simultaneously and in competition at the same active site. The sequence is that of Ribulose bisphosphate carboxylase large chain from Setaria italica (Foxtail millet).